The primary structure comprises 600 residues: MIDLMPKKNTFLLKKKYKEDSNNSVINNLFDFFGKEFCFHQITLTGFPIIWIDKTLLIEVGKFLYHLSQPYIMLYDLHGVDERIRLHREDLPKADFSVFYHLISIERNSDIMIKVPLLENDLILPTFTGLFPNANWYERETWDMFGIIFNNHPNLTRIIMPSTWKGHPLRKNYSARATEYEPFFLNEQKEDLEMEGLKFKPELWGMKRKNDNVEFMFLNLGPNHPSAHGAFRIVLQLDGENIVDCVPDIGYHHRGAEKMAERQSWHSYIPYTDRIEYLGGCVNELPYVLAVEKLANISVPEKAEVIRVMMSELFRINSHLLYISTFIQDVGCMTPVFFAFTDRQKIYDLIEAITGARMHPAWFRIGGVANDLPQGWNILLKEFLDWMPKRLKYYINTALKNSILIHRSKGIAEYNKKEALQWGVTGAGLRATGLNFDVRKWRPYSGYQNYTFEVPVGSGISDCYSRVMIKVEEIYQSLFILKQCLCNMPSGPFKSEDSLTTPPSKECVLQNIETMITHFLQVSWGPVIPENESFQMIEATKGINSYYLISDGGTMSYRTRIRTPSFPHLQQIPSVIRGSLISDLIVYLGSIDFVMSDVDR.

The segment at 1-190 is NADH dehydrogenase I subunit C; it reads MIDLMPKKNT…EPFFLNEQKE (190 aa). The interval 214 to 600 is NADH dehydrogenase I subunit D; that stretch reads EFMFLNLGPN…IDFVMSDVDR (387 aa).

In the N-terminal section; belongs to the complex I 30 kDa subunit family. This sequence in the C-terminal section; belongs to the complex I 49 kDa subunit family. NDH-1 is composed of 13 different subunits. Subunits NuoB, CD, E, F, and G constitute the peripheral sector of the complex.

The protein localises to the cell inner membrane. It catalyses the reaction a quinone + NADH + 5 H(+)(in) = a quinol + NAD(+) + 4 H(+)(out). NDH-1 shuttles electrons from NADH, via FMN and iron-sulfur (Fe-S) centers, to quinones in the respiratory chain. The immediate electron acceptor for the enzyme in this species is believed to be ubiquinone. Couples the redox reaction to proton translocation (for every two electrons transferred, four hydrogen ions are translocated across the cytoplasmic membrane), and thus conserves the redox energy in a proton gradient. The protein is NADH-quinone oxidoreductase subunit C/D of Buchnera aphidicola subsp. Acyrthosiphon pisum (strain APS) (Acyrthosiphon pisum symbiotic bacterium).